We begin with the raw amino-acid sequence, 524 residues long: Putative UDP-glucuronosyltransferase ugt-56 (524 aa).

A signal peptide spans 1 to 20 (MLWAFIVWLGALCIYGSAFD). N-linked (GlcNAc...) asparagine glycans are attached at residues Asn-125, Asn-277, and Asn-335. The chain crosses the membrane as a helical span at residues 488-508 (LIDSSIALVFMLFIFVFVNHF).

The protein belongs to the UDP-glycosyltransferase family.

The protein localises to the membrane. The catalysed reaction is glucuronate acceptor + UDP-alpha-D-glucuronate = acceptor beta-D-glucuronoside + UDP + H(+). In Caenorhabditis elegans, this protein is Putative UDP-glucuronosyltransferase ugt-56 (ugt-56).